Here is a 244-residue protein sequence, read N- to C-terminus: Thaumatin-like protein 1 (244 aa).

The signal sequence occupies residues 1–22 (MKFEALIGLVLVFLSEHAGVYS). 8 disulfides stabilise this stretch: Cys31-Cys243, Cys79-Cys89, Cys94-Cys101, Cys149-Cys232, Cys154-Cys215, Cys162-Cys178, Cys182-Cys191, and Cys192-Cys202. Asn150 is a glycosylation site (N-linked (GlcNAc...) asparagine).

The protein belongs to the thaumatin family. Post-translationally, N-glycosylated. Style.

The protein resides in the secreted. The polypeptide is Thaumatin-like protein 1 (TL1) (Pyrus pyrifolia (Chinese pear)).